A 364-amino-acid chain; its full sequence is Endoglucanase A (364 aa).

The active-site Proton donor is the Glu169. The Nucleophile role is filled by Glu293.

Belongs to the glycosyl hydrolase 5 (cellulase A) family.

Its subcellular location is the cytoplasm. The catalysed reaction is Endohydrolysis of (1-&gt;4)-beta-D-glucosidic linkages in cellulose, lichenin and cereal beta-D-glucans.. It catalyses the reaction Endohydrolysis of (1-&gt;4)-beta-D-xylosidic linkages in xylans.. Functionally, hydrolyzes both carboxymethylcellulose and xylan. Probably has a role in hydrolyzing oligosaccharides derived from cellulose, which are transported across the cell wall. In Ruminococcus albus, this protein is Endoglucanase A (celA).